The chain runs to 273 residues: Transmembrane epididymal protein 1 (273 aa).

A run of 6 helical transmembrane segments spans residues 34–54 (IVTG…GMVL), 72–92 (LTMF…KNVL), 96–116 (CVGL…LLMV), 129–149 (VYSL…AELW), 158–178 (LMET…GFIL), and 195–215 (IMFV…FLLG).

It belongs to the TMEM45 family.

The protein resides in the membrane. The protein is Transmembrane epididymal protein 1 (TEDDM1) of Homo sapiens (Human).